The primary structure comprises 251 residues: Aliphatic sulfonates import ATP-binding protein SsuB (251 aa).

The ABC transporter domain maps to 3-231 (VSINEVSKYF…PRNKTSQSFQ (229 aa)). 39–46 (GPSGCGKS) contacts ATP.

Belongs to the ABC transporter superfamily. Aliphatic sulfonates importer (TC 3.A.1.17.2) family. As to quaternary structure, the complex is composed of two ATP-binding proteins (SsuB), two transmembrane proteins (SsuC) and a solute-binding protein (SsuA).

Its subcellular location is the cell membrane. The catalysed reaction is ATP + H2O + aliphatic sulfonate-[sulfonate-binding protein]Side 1 = ADP + phosphate + aliphatic sulfonateSide 2 + [sulfonate-binding protein]Side 1.. Functionally, part of the ABC transporter complex SsuABC involved in aliphatic sulfonates import. Responsible for energy coupling to the transport system. The protein is Aliphatic sulfonates import ATP-binding protein SsuB of Bacillus anthracis.